Reading from the N-terminus, the 205-residue chain is V-type ATP synthase subunit E (205 aa).

It belongs to the V-ATPase E subunit family.

Its function is as follows. Produces ATP from ADP in the presence of a proton gradient across the membrane. This chain is V-type ATP synthase subunit E, found in Treponema denticola (strain ATCC 35405 / DSM 14222 / CIP 103919 / JCM 8153 / KCTC 15104).